The sequence spans 174 residues: Shikimate kinase (174 aa).

15-20 is a binding site for ATP; it reads GTGKST. Residue Ser19 participates in Mg(2+) binding. The substrate site is built by Asp37, Arg61, and Gly82. Arg120 serves as a coordination point for ATP. Arg138 contributes to the substrate binding site.

This sequence belongs to the shikimate kinase family. Monomer. It depends on Mg(2+) as a cofactor.

It is found in the cytoplasm. The enzyme catalyses shikimate + ATP = 3-phosphoshikimate + ADP + H(+). It participates in metabolic intermediate biosynthesis; chorismate biosynthesis; chorismate from D-erythrose 4-phosphate and phosphoenolpyruvate: step 5/7. Catalyzes the specific phosphorylation of the 3-hydroxyl group of shikimic acid using ATP as a cosubstrate. In Staphylococcus aureus (strain Mu3 / ATCC 700698), this protein is Shikimate kinase.